The following is a 1391-amino-acid chain: DNA-directed RNA polymerase subunit beta' (1391 aa).

The Zn(2+) site is built by Cys-70, Cys-72, Cys-85, and Cys-88. Positions 461, 463, and 465 each coordinate Mg(2+). Zn(2+) is bound by residues Cys-809, Cys-882, Cys-889, and Cys-892.

It belongs to the RNA polymerase beta' chain family. As to quaternary structure, the RNAP catalytic core consists of 2 alpha, 1 beta, 1 beta' and 1 omega subunit. When a sigma factor is associated with the core the holoenzyme is formed, which can initiate transcription. Requires Mg(2+) as cofactor. Zn(2+) is required as a cofactor.

The catalysed reaction is RNA(n) + a ribonucleoside 5'-triphosphate = RNA(n+1) + diphosphate. Its function is as follows. DNA-dependent RNA polymerase catalyzes the transcription of DNA into RNA using the four ribonucleoside triphosphates as substrates. The polypeptide is DNA-directed RNA polymerase subunit beta' (Zymomonas mobilis subsp. mobilis (strain ATCC 31821 / ZM4 / CP4)).